A 405-amino-acid polypeptide reads, in one-letter code: Cytoplasmic tRNA 2-thiolation protein 2 (405 aa).

The protein belongs to the CTU2/NCS2 family.

The protein resides in the cytoplasm. The protein operates within tRNA modification; 5-methoxycarbonylmethyl-2-thiouridine-tRNA biosynthesis. Functionally, plays a central role in 2-thiolation of mcm(5)S(2)U at tRNA wobble positions of tRNA(Lys), tRNA(Glu) and tRNA(Gln). May act by forming a heterodimer with NCS6/CTU1 that ligates sulfur from thiocarboxylated URM1 onto the uridine of tRNAs at wobble position. The chain is Cytoplasmic tRNA 2-thiolation protein 2 from Drosophila simulans (Fruit fly).